Reading from the N-terminus, the 366-residue chain is Ribosomal RNA large subunit methyltransferase M (366 aa).

Residues S188, 221–224 (CPGG), D240, D260, and D277 each bind S-adenosyl-L-methionine. K306 serves as the catalytic Proton acceptor.

This sequence belongs to the class I-like SAM-binding methyltransferase superfamily. RNA methyltransferase RlmE family. RlmM subfamily. As to quaternary structure, monomer.

It is found in the cytoplasm. It carries out the reaction cytidine(2498) in 23S rRNA + S-adenosyl-L-methionine = 2'-O-methylcytidine(2498) in 23S rRNA + S-adenosyl-L-homocysteine + H(+). Its function is as follows. Catalyzes the 2'-O-methylation at nucleotide C2498 in 23S rRNA. The protein is Ribosomal RNA large subunit methyltransferase M of Escherichia coli O45:K1 (strain S88 / ExPEC).